The following is a 328-amino-acid chain: Probable voltage-gated potassium channel subunit beta (328 aa).

Residues W21, Q27, and D49 each coordinate NADP(+). Y54 acts as the Proton donor/acceptor in catalysis. NADP(+) contacts are provided by S152, Q178, W207, S208, P209, L210, A211, K218, R229, G285, T287, Q291, E294, and N295.

This sequence belongs to the shaker potassium channel beta subunit family. Forms heteromultimeric complexes with potassium channel alpha subunits. As to expression, expressed in late-developed leaves with the highest expression in the flag leaf (at protein level).

Functionally, probable accessory potassium channel protein which modulates the activity of the pore-forming alpha subunit. This is Probable voltage-gated potassium channel subunit beta (KOB1) from Oryza sativa subsp. japonica (Rice).